The following is a 269-amino-acid chain: Shikimate dehydrogenase (NADP(+)) (269 aa).

Residues T22–S24 and T68 each bind shikimate. The active-site Proton acceptor is the K72. The shikimate site is built by N93 and D104. NADP(+) contacts are provided by residues G128 to A132, N152 to R157, and F210. Y212 contributes to the shikimate binding site. Residue G233 participates in NADP(+) binding.

Belongs to the shikimate dehydrogenase family. Homodimer.

The catalysed reaction is shikimate + NADP(+) = 3-dehydroshikimate + NADPH + H(+). It participates in metabolic intermediate biosynthesis; chorismate biosynthesis; chorismate from D-erythrose 4-phosphate and phosphoenolpyruvate: step 4/7. Involved in the biosynthesis of the chorismate, which leads to the biosynthesis of aromatic amino acids. Catalyzes the reversible NADPH linked reduction of 3-dehydroshikimate (DHSA) to yield shikimate (SA). This is Shikimate dehydrogenase (NADP(+)) from Saccharolobus islandicus (strain Y.N.15.51 / Yellowstone #2) (Sulfolobus islandicus).